The primary structure comprises 421 residues: Synaptotagmin-1 (421 aa).

The Vesicular portion of the chain corresponds to 1–57; sequence MVSASRPEALAAPVTTVATLVPHNATEPASPGEGKEDAFSKLKQKFMNELHKIPLPP. N-linked (GlcNAc...) asparagine glycosylation occurs at asparagine 24. A helical transmembrane segment spans residues 58–79; the sequence is WALIAIAIVAVLLVVTCCFCVC. S-palmitoyl cysteine attachment occurs at residues cysteine 74, cysteine 75, cysteine 77, cysteine 79, and cysteine 82. Topologically, residues 80–421 are cytoplasmic; it reads KKCLFKKKNK…EVDAMLAVKK (342 aa). The segment at 112–141 is disordered; sequence TMKDQALKDDDAETGLTDGEEKEEPKEEEK. The segment covering 121-133 has biased composition (acidic residues); it reads DDAETGLTDGEEK. At threonine 128 the chain carries Phosphothreonine. Residues 135–381 form a phospholipid binding region; it reads EPKEEEKLGK…AIGKVFVGYN (247 aa). The region spanning 141–260 is the C2 1 domain; that stretch reads KLGKLQYSLD…DFGHVTEEWR (120 aa). Ca(2+)-binding residues include leucine 171, aspartate 172, and aspartate 178. Tyrosine 229 is subject to Phosphotyrosine. The Ca(2+) site is built by aspartate 230, phenylalanine 231, aspartate 232, serine 235, lysine 236, and aspartate 238. Serine 264 is modified (phosphoserine). The region spanning 272–405 is the C2 2 domain; that stretch reads KLGDICFSLR…NPRRPIAQWH (134 aa). 2 residues coordinate Ca(2+): aspartate 303 and aspartate 309. Serine 342 and serine 344 each carry phosphoserine. Residues aspartate 363, aspartate 365, and aspartate 371 each coordinate Ca(2+).

Belongs to the synaptotagmin family. Homotetramer. Heterodimer; heterodimerizes with SYT2 in presence of calcium. Interacts with SCAMP5. Interacts with STON2. Forms a complex with SV2B, syntaxin 1 and SNAP25. Interacts with SV2A, SV2B and SV2C. Interacts with RIMS1. Interacts with PRRT2. Interacts with DNAJC5 in a phosphorylation-dependent manner. Interacts (via N-terminus) with RAB3A. Interacts with SYT12. Interacts with calmodulin. Interacts with DNM1 (via C-terminal proline-rich domain (PRD)); this interaction facilitates vesicle fission during clathrin-mediated endocytosis (CME). It depends on Ca(2+) as a cofactor. Post-translationally, glycosylated. In terms of tissue distribution, expressed in the brain and adrenal medulla (at protein level).

It is found in the cytoplasmic vesicle. The protein localises to the secretory vesicle membrane. The protein resides in the secretory vesicle. Its subcellular location is the synaptic vesicle membrane. It localises to the chromaffin granule membrane. It is found in the cytoplasm. Its function is as follows. Calcium sensor that participates in triggering neurotransmitter release at the synapse. May have a regulatory role in the membrane interactions during trafficking of synaptic vesicles at the active zone of the synapse. It binds acidic phospholipids with a specificity that requires the presence of both an acidic head group and a diacyl backbone. A Ca(2+)-dependent interaction between synaptotagmin and putative receptors for activated protein kinase C has also been reported. It can bind to at least three additional proteins in a Ca(2+)-independent manner; these are neurexins, syntaxin and AP2. Plays a role in dendrite formation by melanocytes. In Mus musculus (Mouse), this protein is Synaptotagmin-1.